The chain runs to 563 residues: Methylcrotonoyl-CoA carboxylase beta chain, mitochondrial (563 aa).

A mitochondrion-targeting transit peptide spans 1–22 (MWAVLRLALRPCARASPAGPRA). The region spanning 49–306 (MKALVNQLHE…QKKLDVTIEP (258 aa)) is the CoA carboxyltransferase N-terminal domain. Positions 49-555 (MKALVNQLHE…SAALNAPIEK (507 aa)) are carboxyltransferase. Residue Lys-70 is modified to N6-acetyllysine; alternate. Position 70 is an N6-succinyllysine; alternate (Lys-70). Lys-141 carries the post-translational modification N6-succinyllysine. The region spanning 309–555 (EPLFPADELY…SAALNAPIEK (247 aa)) is the CoA carboxyltransferase C-terminal domain. Residues 343–372 (RFTEFKAFYGDTLVTGFARIFGYPVGIVGN) are acyl-CoA binding. At Lys-495 the chain carries N6-acetyllysine; alternate. Lys-495 carries the post-translational modification N6-succinyllysine; alternate. At Lys-511 the chain carries N6-acetyllysine.

Belongs to the AccD/PCCB family. In terms of assembly, probably a dodecamer composed of six biotin-containing alpha subunits (MCCC1) and six beta (MCCC2) subunits.

Its subcellular location is the mitochondrion matrix. The catalysed reaction is 3-methylbut-2-enoyl-CoA + hydrogencarbonate + ATP = 3-methyl-(2E)-glutaconyl-CoA + ADP + phosphate + H(+). It participates in amino-acid degradation; L-leucine degradation; (S)-3-hydroxy-3-methylglutaryl-CoA from 3-isovaleryl-CoA: step 2/3. Carboxyltransferase subunit of the 3-methylcrotonyl-CoA carboxylase, an enzyme that catalyzes the conversion of 3-methylcrotonyl-CoA to 3-methylglutaconyl-CoA, a critical step for leucine and isovaleric acid catabolism. This chain is Methylcrotonoyl-CoA carboxylase beta chain, mitochondrial (MCCC2), found in Homo sapiens (Human).